Here is a 181-residue protein sequence, read N- to C-terminus: Large ribosomal subunit protein uL5c (181 aa).

It belongs to the universal ribosomal protein uL5 family. As to quaternary structure, part of the 50S ribosomal subunit; contacts the 5S rRNA.

Its subcellular location is the plastid. It localises to the chloroplast. Functionally, binds 5S rRNA, forms part of the central protuberance of the 50S subunit. In Heterosigma akashiwo (strain NIES-293 / 8280G21-1), this protein is Large ribosomal subunit protein uL5c (rpl5).